The following is a 614-amino-acid chain: Acetylcholinesterase (614 aa).

The signal sequence occupies residues 1–31 (MRPPQCLLHTPSLASPLLLLLLWLLGGGVGA). Cys100 and Cys127 are disulfide-bonded. Trp117 is a galanthamine binding site. Trp117 is a binding site for huperzine A. Gly153 lines the huprine W pocket. Tyr164 contributes to the huperzine A binding site. 233–234 (ES) is a binding site for galanthamine. Ser234 lines the huprine W pocket. Residue Ser234 is the Acyl-ester intermediate of the active site. Cys288 and Cys303 are disulfide-bonded. An N-linked (GlcNAc...) asparagine glycan is attached at Asn296. The Charge relay system role is filled by Glu365. Residue Tyr368 participates in galanthamine binding. Huperzine A is bound at residue Tyr368. Asn381 is a glycosylation site (N-linked (GlcNAc...) asparagine). A disulfide bond links Cys440 and Cys560. Trp470 and His478 together coordinate huprine W. The active-site Charge relay system is His478. A glycan (N-linked (GlcNAc...) asparagine) is linked at Asn495. The GPI-anchor amidated glycine moiety is linked to residue Phe588.

This sequence belongs to the type-B carboxylesterase/lipase family. As to quaternary structure, interacts with PRIMA1. The interaction with PRIMA1 is required to anchor it to the basal lamina of cells and organize into tetramers. Isoform H generates GPI-anchored dimers; disulfide linked. Isoform T generates multiple structures, ranging from monomers and dimers to collagen-tailed and hydrophobic-tailed forms, in which catalytic tetramers are associated with anchoring proteins that attach them to the basal lamina or to cell membranes. In the collagen-tailed forms, isoform T subunits are associated with a specific collagen, COLQ, which triggers the formation of isoform T tetramers, from monomers and dimers. Isoform R may be monomeric. In terms of tissue distribution, isoform H is highly expressed in erythrocytes.

The protein localises to the synapse. It is found in the secreted. It localises to the cell membrane. Its subcellular location is the nucleus. The enzyme catalyses acetylcholine + H2O = choline + acetate + H(+). Hydrolyzes rapidly the acetylcholine neurotransmitter released into the synaptic cleft allowing to terminate the signal transduction at the neuromuscular junction. Role in neuronal apoptosis. The protein is Acetylcholinesterase of Homo sapiens (Human).